Here is a 351-residue protein sequence, read N- to C-terminus: UDP-3-O-acylglucosamine N-acyltransferase (351 aa).

The Proton acceptor role is filled by histidine 257.

It belongs to the transferase hexapeptide repeat family. LpxD subfamily. As to quaternary structure, homotrimer.

It carries out the reaction a UDP-3-O-[(3R)-3-hydroxyacyl]-alpha-D-glucosamine + a (3R)-hydroxyacyl-[ACP] = a UDP-2-N,3-O-bis[(3R)-3-hydroxyacyl]-alpha-D-glucosamine + holo-[ACP] + H(+). It functions in the pathway bacterial outer membrane biogenesis; LPS lipid A biosynthesis. Catalyzes the N-acylation of UDP-3-O-acylglucosamine using 3-hydroxyacyl-ACP as the acyl donor. Is involved in the biosynthesis of lipid A, a phosphorylated glycolipid that anchors the lipopolysaccharide to the outer membrane of the cell. This Brucella abortus (strain S19) protein is UDP-3-O-acylglucosamine N-acyltransferase.